The sequence spans 655 residues: Acetyl-coenzyme A synthetase (655 aa).

CoA is bound by residues 193–196 (RGNK) and threonine 313. ATP contacts are provided by residues 389–391 (GEP), 413–418 (DTWWQT), aspartate 502, and arginine 517. Serine 525 contacts CoA. An ATP-binding site is contributed by arginine 528. Mg(2+) contacts are provided by valine 539 and histidine 541. Arginine 586 serves as a coordination point for CoA. At lysine 611 the chain carries N6-acetyllysine.

Belongs to the ATP-dependent AMP-binding enzyme family. Mg(2+) serves as cofactor. Post-translationally, acetylated. Deacetylation by the SIR2-homolog deacetylase activates the enzyme.

It carries out the reaction acetate + ATP + CoA = acetyl-CoA + AMP + diphosphate. Its function is as follows. Catalyzes the conversion of acetate into acetyl-CoA (AcCoA), an essential intermediate at the junction of anabolic and catabolic pathways. AcsA undergoes a two-step reaction. In the first half reaction, AcsA combines acetate with ATP to form acetyl-adenylate (AcAMP) intermediate. In the second half reaction, it can then transfer the acetyl group from AcAMP to the sulfhydryl group of CoA, forming the product AcCoA. This is Acetyl-coenzyme A synthetase from Psychrobacter cryohalolentis (strain ATCC BAA-1226 / DSM 17306 / VKM B-2378 / K5).